The primary structure comprises 129 residues: Holo-[acyl-carrier-protein] synthase (129 aa).

Mg(2+) contacts are provided by Asp8 and Glu60.

It belongs to the P-Pant transferase superfamily. AcpS family. The cofactor is Mg(2+).

The protein resides in the cytoplasm. It carries out the reaction apo-[ACP] + CoA = holo-[ACP] + adenosine 3',5'-bisphosphate + H(+). In terms of biological role, transfers the 4'-phosphopantetheine moiety from coenzyme A to a Ser of acyl-carrier-protein. The chain is Holo-[acyl-carrier-protein] synthase from Anaeromyxobacter sp. (strain Fw109-5).